The chain runs to 385 residues: 3-hydroxyisobutyryl-CoA hydrolase, mitochondrial (385 aa).

The transit peptide at 1–32 (MGQPYAWRLLSRVSSFRRASVILQHLRMSMHT) directs the protein to the mitochondrion. An N6-acetyllysine; alternate mark is found at Lys54, Lys91, and Lys100. 3 positions are modified to N6-succinyllysine; alternate: Lys54, Lys91, and Lys100. Substrate-binding residues include Glu120, Gly145, Glu168, and Asp176. Residue Lys220 is modified to N6-acetyllysine; alternate. Residue Lys220 is modified to N6-succinyllysine; alternate. Ser233 carries the post-translational modification Phosphoserine. An N6-succinyllysine mark is found at Lys249 and Lys256. At Lys296 the chain carries N6-acetyllysine; alternate. Position 296 is an N6-succinyllysine; alternate (Lys296). Residue Lys300 is modified to N6-succinyllysine. At Lys352 the chain carries N6-acetyllysine; alternate. At Lys352 the chain carries N6-succinyllysine; alternate. Residues Lys359 and Lys364 each carry the N6-acetyllysine modification. Lys376 is subject to N6-succinyllysine.

It belongs to the enoyl-CoA hydratase/isomerase family.

Its subcellular location is the mitochondrion. The enzyme catalyses 3-hydroxy-2-methylpropanoyl-CoA + H2O = 3-hydroxy-2-methylpropanoate + CoA + H(+). Its pathway is amino-acid degradation; L-valine degradation. Functionally, hydrolyzes 3-hydroxyisobutyryl-CoA (HIBYL-CoA), a saline catabolite. Has high activity toward isobutyryl-CoA. Could be an isobutyryl-CoA dehydrogenase that functions in valine catabolism. Also hydrolyzes 3-hydroxypropanoyl-CoA. This is 3-hydroxyisobutyryl-CoA hydrolase, mitochondrial (Hibch) from Mus musculus (Mouse).